Reading from the N-terminus, the 628-residue chain is Beta-galactosidase large subunit (628 aa).

Glu-468 acts as the Proton donor in catalysis. Residue Glu-536 is the Nucleophile of the active site.

This sequence belongs to the glycosyl hydrolase 2 family. In terms of assembly, heterodimer of a large (LacL) and a small subunit (LacM).

The catalysed reaction is Hydrolysis of terminal non-reducing beta-D-galactose residues in beta-D-galactosides.. Functionally, component of a beta-galactosidase. This Lactobacillus acidophilus (strain ATCC 700396 / NCK56 / N2 / NCFM) protein is Beta-galactosidase large subunit (lacL).